A 235-amino-acid chain; its full sequence is Orotidine 5'-phosphate decarboxylase (235 aa).

Substrate-binding positions include Asp11, Lys33, 60–69 (DLKFHDIPNT), Thr119, Arg180, Gln189, Gly209, and Arg210. The active-site Proton donor is the Lys62.

This sequence belongs to the OMP decarboxylase family. Type 1 subfamily. Homodimer.

The enzyme catalyses orotidine 5'-phosphate + H(+) = UMP + CO2. The protein operates within pyrimidine metabolism; UMP biosynthesis via de novo pathway; UMP from orotate: step 2/2. Catalyzes the decarboxylation of orotidine 5'-monophosphate (OMP) to uridine 5'-monophosphate (UMP). The polypeptide is Orotidine 5'-phosphate decarboxylase (Alkalilimnicola ehrlichii (strain ATCC BAA-1101 / DSM 17681 / MLHE-1)).